The sequence spans 384 residues: SAGA complex subunit Spt3 (384 aa).

Belongs to the SPT3 family. In terms of assembly, component of the Spt-Ada-Gcn5 acetyltransferase (SAGA) complex consisting of wda/Taf5L, Saf6, Taf9, Taf10b, Taf12, Ada1, Spt3, Spt7, Spt20, Sf3b3, Sf3b5, Nipped-A/Tra1, a histone acetyltransferase (HAT) module made up of Gcn5, Ada2b (Isoform B), Ada3 and Sgf29, and a deubiquitinase (DUB) module made up of not/nonstop, Sgf11 and e(y)2 tethered to SAGA by Atxn7. Taf5 and Taf10, which has partially redundant properties with Taf10b, may also be part of this complex.

It is found in the nucleus. Its subcellular location is the chromosome. In terms of biological role, component of the transcription regulatory complex SAGA, a multiprotein complex that activates transcription by remodeling chromatin and mediating histone acetylation and deubiquitination. The SAGA complex predominantly acetylates histone H3. Required for oogenesis; involved in transcriptional activation. This is SAGA complex subunit Spt3 from Drosophila melanogaster (Fruit fly).